The chain runs to 323 residues: Aldo-keto reductase family 1 member C4 (323 aa).

NADP(+) contacts are provided by residues 20-24 (GFGSY) and aspartate 50. Tyrosine 55 (proton donor) is an active-site residue. Histidine 117 serves as a coordination point for substrate. Residues 166–167 (SN), glutamine 190, 216–221 (HSALGT), and 270–280 (KSYNEQRIREN) contribute to the NADP(+) site.

It belongs to the aldo/keto reductase family. Monomer. As to expression, high expression in liver. Also expressed in kidney.

It localises to the cytoplasm. The protein resides in the cytosol. The catalysed reaction is chlordecone alcohol + NADP(+) = chlordecone + NADPH + H(+). It carries out the reaction a 3alpha-hydroxysteroid + NADP(+) = a 3-oxosteroid + NADPH + H(+). It catalyses the reaction a 3alpha-hydroxysteroid + NAD(+) = a 3-oxosteroid + NADH + H(+). The enzyme catalyses 5alpha-androstane-3alpha,17beta-diol + NADP(+) = 17beta-hydroxy-5alpha-androstan-3-one + NADPH + H(+). The catalysed reaction is 5alpha-androstane-3beta,17beta-diol + NADP(+) = 17beta-hydroxy-5alpha-androstan-3-one + NADPH + H(+). It carries out the reaction 5alpha-androstane-3alpha,17beta-diol + NAD(+) = 17beta-hydroxy-5alpha-androstan-3-one + NADH + H(+). It catalyses the reaction 17beta-estradiol + NADP(+) = estrone + NADPH + H(+). The enzyme catalyses 17beta-estradiol + NAD(+) = estrone + NADH + H(+). The catalysed reaction is (20S)-hydroxypregn-4-en-3-one + NADP(+) = progesterone + NADPH + H(+). It carries out the reaction (20S)-hydroxypregn-4-en-3-one + NAD(+) = progesterone + NADH + H(+). It catalyses the reaction androsterone + NADP(+) = 5alpha-androstan-3,17-dione + NADPH + H(+). The enzyme catalyses testosterone + NADP(+) = androst-4-ene-3,17-dione + NADPH + H(+). The catalysed reaction is testosterone + NAD(+) = androst-4-ene-3,17-dione + NADH + H(+). It carries out the reaction 3alpha-hydroxy-5alpha-androstane 17-O-(beta-D-glucuronate) + NADP(+) = 5alpha-dihydrotestosterone 17-O-(beta-D-glucuronate) + NADPH + H(+). It catalyses the reaction (3beta,5alpha,17beta)-3-hydroxy-androstan-17-yl sulfate + NADP(+) = 5alpha-dihydrotestosterone sulfate + NADPH + H(+). The enzyme catalyses 5alpha-androstane-3alpha,17beta-diol + NAD(+) = androsterone + NADH + H(+). It participates in steroid metabolism. Its activity is regulated as follows. Potently inhibited by benzbromarone, 3',3'',5',5''-tetrabromophenolphthalein (TBPP) and o-cresolphthalein. Its function is as follows. Cytosolic aldo-keto reductase that catalyzes the NADH and NADPH-dependent reduction of ketosteroids to hydroxysteroids. Liver specific enzyme that acts as an NAD(P)(H)-dependent 3-, 17- and 20-ketosteroid reductase on the steroid nucleus and side chain. Displays the ability to catalyze both oxidation and reduction in vitro, but most probably acts as a reductase in vivo since the oxidase activity measured in vitro is inhibited by physiological concentration of NADPH. Acts preferentially as a 3-alpha-hydroxysteroid dehydrogenase (HSD) with a subsidiary 3-beta-HSD activity. Catalyzes efficiently the transformation of the potent androgen 5-alpha-dihydrotestosterone (5alpha-DHT or 17beta-hydroxy-5alpha-androstan-3-one) into the less active form, 5-alpha-androstan-3-alpha,17-beta-diol (3-alpha-diol). Catalyzes the reduction of estrone into 17beta-estradiol but with low efficiency. Metabolizes a broad spectrum of natural and synthetic therapeutic steroid and plays an important role in metabolism of androgens, estrogens, progestereone and conjugated steroids. Catalyzes the biotransformation of the pesticide chlordecone (kepone) to its corresponding alcohol leading to increased biliary excretion of the pesticide and concomitant reduction of its neurotoxicity since bile is the major excretory route. This Macaca fuscata fuscata (Japanese macaque) protein is Aldo-keto reductase family 1 member C4 (AKR1C4).